A 228-amino-acid chain; its full sequence is Isonitrile hydratase (228 aa).

Cys-101 is a catalytic residue.

As to quaternary structure, homodimer.

It catalyses the reaction N-cyclohexylformamide = cyclohexyl isocyanide + H2O. With respect to regulation, sensitive to thiol reagents and oxidizing reagents, but is not influenced by chelators or reducing reagents. Catalyzes the hydration of cyclohexyl isocyanide to N-cyclohexylformamide. Acts on various isonitriles, but not on nitriles or amides. Probably involved in detoxification. The chain is Isonitrile hydratase (inhA) from Pseudomonas putida (Arthrobacter siderocapsulatus).